Consider the following 506-residue polypeptide: Cysteine--tRNA ligase (506 aa).

A Zn(2+)-binding site is contributed by cysteine 34. A 'HIGH' region motif is present at residues 36–46 (PTVYDFAHIGN). Positions 230, 269, and 273 each coordinate Zn(2+). Residues 302–306 (KMSKS) carry the 'KMSKS' region motif. Residue lysine 305 participates in ATP binding.

Belongs to the class-I aminoacyl-tRNA synthetase family. As to quaternary structure, monomer. It depends on Zn(2+) as a cofactor.

Its subcellular location is the cytoplasm. It catalyses the reaction tRNA(Cys) + L-cysteine + ATP = L-cysteinyl-tRNA(Cys) + AMP + diphosphate. This chain is Cysteine--tRNA ligase, found in Brucella abortus (strain S19).